Here is a 159-residue protein sequence, read N- to C-terminus: Cyclic pyranopterin monophosphate synthase (159 aa).

Residues 75-77 (LCH) and 113-114 (ME) contribute to the substrate site. Asp128 is a catalytic residue.

Belongs to the MoaC family. As to quaternary structure, homohexamer; trimer of dimers.

It carries out the reaction (8S)-3',8-cyclo-7,8-dihydroguanosine 5'-triphosphate = cyclic pyranopterin phosphate + diphosphate. The protein operates within cofactor biosynthesis; molybdopterin biosynthesis. Its function is as follows. Catalyzes the conversion of (8S)-3',8-cyclo-7,8-dihydroguanosine 5'-triphosphate to cyclic pyranopterin monophosphate (cPMP). The chain is Cyclic pyranopterin monophosphate synthase from Yersinia pseudotuberculosis serotype O:3 (strain YPIII).